We begin with the raw amino-acid sequence, 170 residues long: Adenine phosphoribosyltransferase (170 aa).

Belongs to the purine/pyrimidine phosphoribosyltransferase family. In terms of assembly, homodimer.

Its subcellular location is the cytoplasm. It catalyses the reaction AMP + diphosphate = 5-phospho-alpha-D-ribose 1-diphosphate + adenine. It functions in the pathway purine metabolism; AMP biosynthesis via salvage pathway; AMP from adenine: step 1/1. Catalyzes a salvage reaction resulting in the formation of AMP, that is energically less costly than de novo synthesis. This Fervidobacterium nodosum (strain ATCC 35602 / DSM 5306 / Rt17-B1) protein is Adenine phosphoribosyltransferase.